The chain runs to 417 residues: Serine hydroxymethyltransferase (417 aa).

(6S)-5,6,7,8-tetrahydrofolate is bound by residues Leu121 and 125–127; that span reads GHL. Lys229 carries the N6-(pyridoxal phosphate)lysine modification. 355-357 lines the (6S)-5,6,7,8-tetrahydrofolate pocket; it reads SPF.

This sequence belongs to the SHMT family. In terms of assembly, homodimer. The cofactor is pyridoxal 5'-phosphate.

The protein resides in the cytoplasm. The enzyme catalyses (6R)-5,10-methylene-5,6,7,8-tetrahydrofolate + glycine + H2O = (6S)-5,6,7,8-tetrahydrofolate + L-serine. Its pathway is one-carbon metabolism; tetrahydrofolate interconversion. It participates in amino-acid biosynthesis; glycine biosynthesis; glycine from L-serine: step 1/1. In terms of biological role, catalyzes the reversible interconversion of serine and glycine with tetrahydrofolate (THF) serving as the one-carbon carrier. This reaction serves as the major source of one-carbon groups required for the biosynthesis of purines, thymidylate, methionine, and other important biomolecules. Also exhibits THF-independent aldolase activity toward beta-hydroxyamino acids, producing glycine and aldehydes, via a retro-aldol mechanism. This is Serine hydroxymethyltransferase from Shewanella sp. (strain W3-18-1).